Consider the following 448-residue polypeptide: Exodeoxyribonuclease 7 large subunit (448 aa).

It belongs to the XseA family. As to quaternary structure, heterooligomer composed of large and small subunits.

It localises to the cytoplasm. The protein resides in the nucleoid. It catalyses the reaction Exonucleolytic cleavage in either 5'- to 3'- or 3'- to 5'-direction to yield nucleoside 5'-phosphates.. In terms of biological role, bidirectionally degrades single-stranded DNA into large acid-insoluble oligonucleotides, which are then degraded further into small acid-soluble oligonucleotides. The polypeptide is Exodeoxyribonuclease 7 large subunit (Bacillus subtilis (strain 168)).